The primary structure comprises 406 residues: Probable tRNA sulfurtransferase (406 aa).

A THUMP domain is found at 60–162 (PEAKARLQDT…PGAALLEVER (103 aa)). ATP-binding positions include 180 to 181 (LL), 205 to 206 (HF), R262, G284, and Q293.

The protein belongs to the ThiI family.

The protein localises to the cytoplasm. The catalysed reaction is [ThiI sulfur-carrier protein]-S-sulfanyl-L-cysteine + a uridine in tRNA + 2 reduced [2Fe-2S]-[ferredoxin] + ATP + H(+) = [ThiI sulfur-carrier protein]-L-cysteine + a 4-thiouridine in tRNA + 2 oxidized [2Fe-2S]-[ferredoxin] + AMP + diphosphate. It carries out the reaction [ThiS sulfur-carrier protein]-C-terminal Gly-Gly-AMP + S-sulfanyl-L-cysteinyl-[cysteine desulfurase] + AH2 = [ThiS sulfur-carrier protein]-C-terminal-Gly-aminoethanethioate + L-cysteinyl-[cysteine desulfurase] + A + AMP + 2 H(+). Its pathway is cofactor biosynthesis; thiamine diphosphate biosynthesis. Functionally, catalyzes the ATP-dependent transfer of a sulfur to tRNA to produce 4-thiouridine in position 8 of tRNAs, which functions as a near-UV photosensor. Also catalyzes the transfer of sulfur to the sulfur carrier protein ThiS, forming ThiS-thiocarboxylate. This is a step in the synthesis of thiazole, in the thiamine biosynthesis pathway. The sulfur is donated as persulfide by IscS. The protein is Probable tRNA sulfurtransferase of Thermus thermophilus (strain ATCC 27634 / DSM 579 / HB8).